The chain runs to 862 residues: Fork head protein homolog 2 (862 aa).

The region spanning 83–152 (VSIGRNTDPL…NGAKVNFQRT (70 aa)) is the FHA domain. The fork-head DNA-binding region spans 339–430 (VKPPHSYATM…QQEFLNKWNT (92 aa)). Disordered stretches follow at residues 498 to 528 (PSKG…QEQR), 611 to 663 (SDSA…GTTT), 698 to 730 (PERG…LQTS), and 750 to 846 (ESNN…ANAK). Positions 504–520 (PASQQSQPPVSHQNQSQ) are enriched in low complexity. Residues 611 to 644 (SDSADKSTNNNGGTKMNLPAISTSSLDENGNLEP) are compositionally biased toward polar residues. Residues 645–655 (TTTTSSGNSNS) are compositionally biased toward low complexity. Serine 708 bears the Phosphoserine mark. The span at 712 to 726 (SNSNNTNNNGANNSN) shows a compositional bias: low complexity. 2 stretches are compositionally biased toward polar residues: residues 750-770 (ESNN…NVKS) and 778-788 (LQFSSTNNTPA). Residues 804 to 829 (IKAKENENATSEKDSDSNSNDLETKD) show a composition bias toward basic and acidic residues. Positions 830–844 (INSSPLKNQGGSTAN) are enriched in polar residues. 2 positions are modified to phosphoserine: serine 832 and serine 833.

In terms of assembly, interacts with MCM1. Interacts with NDD1. Interacts with the origin recognition complex (ORC) composed of ORC1 to ORC6.

Its subcellular location is the nucleus. The protein resides in the cytoplasm. It localises to the cytosol. Its function is as follows. Transcription factor that regulates the expression of the CLB2 cluster of genes during the G2/M phase of the mitotic cell cycle. The CLB2 cluster of genes includes mitotic regulators such as CLB1, CLB2, CDC5 and CDC20 as well as SWI5 and ACE2, transcription factors required for the subsequent temporal wave of cell cycle regulated gene expression in the M/G1 phase interval. Involved in HMRa silencing. FKH1 and FKH2 associate with the coding regions of active genes and influence, in opposing ways, transcriptional elongation and termination, and coordinate early transcription elongation and pre-mRNA processing. Both FKH1 and FKH2 play a role as regulators of lifespan in collaboration with the anaphase-promoting complex (APC), likely through combined regulation of stress response, genomic stability, and cell cycle regulation. FKH1 and FKH2 function also in controlling yeast cell morphology by preventing preudohyphal growth. Acts as a rate-limiting replication origin activator via its interaction with the origin recognition complex (ORC). The protein is Fork head protein homolog 2 of Saccharomyces cerevisiae (strain ATCC 204508 / S288c) (Baker's yeast).